Consider the following 251-residue polypeptide: uncharacterized protein (251 aa).

This sequence to Anabaena PCC 7120 alr2406.

This is an uncharacterized protein from Synechocystis sp. (strain ATCC 27184 / PCC 6803 / Kazusa).